We begin with the raw amino-acid sequence, 263 residues long: Inactive adenylate kinase (263 aa).

It belongs to the adenylate kinase family.

The protein resides in the cytoplasm. Lacks adenylate kinase activity. In Plasmodium falciparum (isolate 3D7), this protein is Inactive adenylate kinase.